Reading from the N-terminus, the 459-residue chain is Cysteine--tRNA ligase (459 aa).

Position 29 (cysteine 29) interacts with Zn(2+). The 'HIGH' region signature appears at 31–41; the sequence is PTVYDRAHIGN. Zn(2+)-binding residues include cysteine 209, histidine 234, and glutamate 238. A 'KMSKS' region motif is present at residues 267 to 271; the sequence is KMSKS. Lysine 270 contributes to the ATP binding site.

It belongs to the class-I aminoacyl-tRNA synthetase family. In terms of assembly, monomer. Zn(2+) is required as a cofactor.

Its subcellular location is the cytoplasm. The enzyme catalyses tRNA(Cys) + L-cysteine + ATP = L-cysteinyl-tRNA(Cys) + AMP + diphosphate. The chain is Cysteine--tRNA ligase from Rhodospirillum rubrum (strain ATCC 11170 / ATH 1.1.1 / DSM 467 / LMG 4362 / NCIMB 8255 / S1).